The following is a 108-amino-acid chain: UPF0102 protein Shewana3_3881 (108 aa).

Belongs to the UPF0102 family.

The chain is UPF0102 protein Shewana3_3881 from Shewanella sp. (strain ANA-3).